A 291-amino-acid polypeptide reads, in one-letter code: Protease HtpX (291 aa).

A run of 2 helical transmembrane segments spans residues 4 to 24 (IILF…ILSF) and 32 to 52 (ISGL…ISLL). His139 serves as a coordination point for Zn(2+). Residue Glu140 is part of the active site. His143 serves as a coordination point for Zn(2+). The next 2 helical transmembrane spans lie at 158–178 (IVNT…SSIL) and 192–212 (WVYI…ASII). Glu221 contributes to the Zn(2+) binding site.

Belongs to the peptidase M48B family. Zn(2+) is required as a cofactor.

It is found in the cell membrane. In Buchnera aphidicola subsp. Baizongia pistaciae (strain Bp), this protein is Protease HtpX.